Here is a 699-residue protein sequence, read N- to C-terminus: Glutamine--fructose-6-phosphate aminotransferase [isomerizing] (699 aa).

Cys2 acts as the Nucleophile in catalysis. One can recognise a Glutamine amidotransferase type-2 domain in the interval Cys2–Gly303. SIS domains lie at His377–Val516 and Ser544–Pro689.

It carries out the reaction D-fructose 6-phosphate + L-glutamine = D-glucosamine 6-phosphate + L-glutamate. Its pathway is nucleotide-sugar biosynthesis; UDP-N-acetyl-alpha-D-glucosamine biosynthesis; alpha-D-glucosamine 6-phosphate from D-fructose 6-phosphate: step 1/1. In terms of biological role, involved in amino sugar synthesis (formation of chitin, supplies the amino sugars of asparagine-linked oligosaccharides of glycoproteins). The protein is Glutamine--fructose-6-phosphate aminotransferase [isomerizing] (GFA1) of Encephalitozoon cuniculi (strain GB-M1) (Microsporidian parasite).